The primary structure comprises 159 residues: Stress-induced protein 1 (159 aa).

The sHSP domain occupies 33–141 (NNFNNIVPQQ…TVRALPIHTS (109 aa)).

The protein belongs to the small heat shock protein (HSP20) family.

This Caenorhabditis elegans protein is Stress-induced protein 1.